The following is an 83-amino-acid chain: Small integral membrane protein 10 (83 aa).

Residues F64 to Y82 traverse the membrane as a helical segment.

It is found in the membrane. This is Small integral membrane protein 10 (SMIM10) from Homo sapiens (Human).